We begin with the raw amino-acid sequence, 362 residues long: MVLKEIPTENITRPLGRNEVIGLLFRLTIFGAVTYFTIKWMVDAIDPTRKQKVEAQKQAEKLMRQIGVQNVKLSEYEMSIAAHLVDPLTMQITWHDIAGLDEVITELKDTVILPIQKRHLFEGSRLLQPPKGVLLYGPPGCGKTLIAKATAKEAGFRFINLQPSTLTDKWYGESQKLAAAVFSLAIKLQPSIIFIDEIDSFLRNRSSSDHEATAMMKAQFMSLWDGLDTDYNCQVIIMGATNRPQDLDSAILRRMPTRFHINQPNVRQRKDILKLILENENVESAVELSEIAKQTDGFSGSDLREMCRDAALLCVRDFVHQESPEEDFIRPIRQEDLQRAIEKMKKSKSAGVHEAFMQVPLD.

Residues 1–19 (MVLKEIPTENITRPLGRNE) are Mitochondrial intermembrane-facing. Residues 20–42 (VIGLLFRLTIFGAVTYFTIKWMV) traverse the membrane as a helical segment. The Cytoplasmic segment spans residues 43–362 (DAIDPTRKQK…HEAFMQVPLD (320 aa)). 137 to 144 (GPPGCGKT) contacts ATP.

Belongs to the AAA ATPase family. MSP1 subfamily.

The protein resides in the mitochondrion outer membrane. Its subcellular location is the peroxisome membrane. It localises to the postsynaptic cell membrane. The catalysed reaction is [protein]-with a C-terminal TM segment(out) + ATP + H2O = [protein]-with a C-terminal TM segment(in) + ADP + phosphate + H(+). Its function is as follows. Outer mitochondrial translocase required to remove mislocalized tail-anchored transmembrane proteins on mitochondria. Specifically recognizes and binds tail-anchored transmembrane proteins: acts as a dislocase that mediates the ATP-dependent extraction of mistargeted tail-anchored transmembrane proteins from the mitochondrion outer membrane. Also plays a critical role in regulating the surface expression of AMPA receptors (AMPAR), thereby regulating synaptic plasticity and learning and memory. The sequence is that of Outer mitochondrial transmembrane helix translocase from Danio rerio (Zebrafish).